Here is a 335-residue protein sequence, read N- to C-terminus: Glycerol-3-phosphate dehydrogenase [NAD(P)+] (335 aa).

Ser-10, Phe-11, Arg-31, and Lys-105 together coordinate NADPH. Sn-glycerol 3-phosphate contacts are provided by Lys-105, Gly-136, and Ser-138. NADPH is bound at residue Ala-140. Sn-glycerol 3-phosphate contacts are provided by Lys-191, Asp-244, Ser-254, Arg-255, and Asn-256. Lys-191 functions as the Proton acceptor in the catalytic mechanism. Position 255 (Arg-255) interacts with NADPH. NADPH contacts are provided by Val-279 and Glu-281.

This sequence belongs to the NAD-dependent glycerol-3-phosphate dehydrogenase family.

It is found in the cytoplasm. It catalyses the reaction sn-glycerol 3-phosphate + NAD(+) = dihydroxyacetone phosphate + NADH + H(+). The catalysed reaction is sn-glycerol 3-phosphate + NADP(+) = dihydroxyacetone phosphate + NADPH + H(+). The protein operates within membrane lipid metabolism; glycerophospholipid metabolism. Its function is as follows. Catalyzes the reduction of the glycolytic intermediate dihydroxyacetone phosphate (DHAP) to sn-glycerol 3-phosphate (G3P), the key precursor for phospholipid synthesis. The protein is Glycerol-3-phosphate dehydrogenase [NAD(P)+] of Leptospira interrogans serogroup Icterohaemorrhagiae serovar copenhageni (strain Fiocruz L1-130).